The primary structure comprises 354 residues: Serum paraoxonase/arylesterase 2 (354 aa).

A disulfide bridge connects residues Cys-42 and Cys-352. Ca(2+) contacts are provided by Glu-53 and Asp-54. The active-site Proton acceptor is the His-114. Ile-116, Asn-167, Asp-168, and Asn-223 together coordinate Ca(2+). The N-linked (GlcNAc...) asparagine glycan is linked to Asn-254. Ca(2+)-binding residues include Asp-268 and Asn-269. N-linked (GlcNAc...) asparagine glycans are attached at residues Asn-269 and Asn-323.

The protein belongs to the paraoxonase family. Homotrimer. It depends on Ca(2+) as a cofactor. In terms of processing, glycosylated. The signal sequence is not cleaved.

It localises to the membrane. The enzyme catalyses a phenyl acetate + H2O = a phenol + acetate + H(+). It carries out the reaction an N-acyl-L-homoserine lactone + H2O = an N-acyl-L-homoserine + H(+). Capable of hydrolyzing lactones and a number of aromatic carboxylic acid esters. The polypeptide is Serum paraoxonase/arylesterase 2 (PON2) (Bos taurus (Bovine)).